Consider the following 68-residue polypeptide: Cx9C motif-containing protein 4 (68 aa).

The region spanning 4–46 (KDPCQKQACEIQKCLQANSYMESKCQAVIQELRKCCAQYPKGR) is the CHCH domain. 2 short sequence motifs (cx9C motif) span residues 7–17 (CQKQACEIQKC) and 28–38 (CQAVIQELRKC). 3 cysteine pairs are disulfide-bonded: cysteine 7/cysteine 38, cysteine 17/cysteine 28, and cysteine 39/cysteine 50.

It belongs to the CMC4 family. As to expression, expressed in many tissues with a relatively high level in skeletal muscle.

It is found in the mitochondrion. The sequence is that of Cx9C motif-containing protein 4 (CMC4) from Homo sapiens (Human).